Here is a 274-residue protein sequence, read N- to C-terminus: NH(3)-dependent NAD(+) synthetase (274 aa).

Residue 46–53 coordinates ATP; sequence GISGGQDS. A Mg(2+)-binding site is contributed by Asp52. Arg140 is a binding site for deamido-NAD(+). Thr160 lines the ATP pocket. Position 165 (Glu165) interacts with Mg(2+). Residues Lys173 and Asp180 each coordinate deamido-NAD(+). Lys189 and Thr211 together coordinate ATP. 260-261 is a deamido-NAD(+) binding site; the sequence is HK.

It belongs to the NAD synthetase family. Homodimer.

It catalyses the reaction deamido-NAD(+) + NH4(+) + ATP = AMP + diphosphate + NAD(+) + H(+). Its pathway is cofactor biosynthesis; NAD(+) biosynthesis; NAD(+) from deamido-NAD(+) (ammonia route): step 1/1. Catalyzes the ATP-dependent amidation of deamido-NAD to form NAD. Uses ammonia as a nitrogen source. In Listeria monocytogenes serovar 1/2a (strain ATCC BAA-679 / EGD-e), this protein is NH(3)-dependent NAD(+) synthetase.